The following is a 298-amino-acid chain: Uricase (298 aa).

Active-site charge relay system residues include Lys18 and Thr63. Urate-binding residues include Thr63, Asp64, Phe165, Arg182, Val229, Gln230, and Asn256. His258 functions as the Charge relay system in the catalytic mechanism. Positions 296–298 (ARM) match the Microbody targeting signal motif.

It belongs to the uricase family. As to quaternary structure, homotetramer; dimer of dimers.

The protein resides in the peroxisome. The enzyme catalyses urate + O2 + H2O = 5-hydroxyisourate + H2O2. It functions in the pathway purine metabolism; urate degradation; (S)-allantoin from urate: step 1/3. Its activity is regulated as follows. Competitively inhibited by xanthine. In terms of biological role, catalyzes the oxidation of uric acid to 5-hydroxyisourate, which is further processed to form (S)-allantoin. The protein is Uricase of Danio rerio (Zebrafish).